The following is a 405-amino-acid chain: Protein held out wings (405 aa).

Residues 142–210 (YVPVREHPDF…HLSDDLHVLI (69 aa)) enclose the KH domain.

As to quaternary structure, homodimer. Interacts with Sxl; promoting nuclear retention of msl-2 transcripts. As to expression, during embryogenesis, expression is seen in mesodermal precursors of somatic, visceral and pharyngeal muscle. Later in embryogenesis, expression is restricted to heart and muscle attachment sites of the epidermis. During onset of metamorphosis, expression is seen in muscle and muscle attachment cells.

The protein resides in the nucleus. In terms of biological role, RNA-binding protein involved in muscle development and dosage compensation. Vital role in steroid regulation of muscle development and to control heart rate. Required during embryogenesis, in late stages of somatic muscle development, for myotube migration and during metamorphosis for muscle reorganization. Required for integrin-mediated cell-adhesion in wing blade. Together with Sxl, acts as an inhibitor of dosage compensation in females by preventing production of msl-2 protein, an essential component of the MSL complex. Specifically binds to the 5'-UTR of msl-2 transcripts and cooperates with Sxl to promote nuclear retention of msl-2 mRNAs. The sequence is that of Protein held out wings (how) from Drosophila melanogaster (Fruit fly).